The sequence spans 446 residues: Packaging protein 1 (446 aa).

Over residues 1 to 10 (METRGRRRAF) the composition is skewed to basic residues. Positions 1–74 (METRGRRRAF…PSQPPQPRSL (74 aa)) are disordered. Position 170-177 (170-177 (GPTGCGKS)) interacts with ATP. The DNA-binding stretch occupies residues 439-446 (RAYRKRNK).

This sequence belongs to the adenoviridae packaging protein 1 family. Homodimer. Part of a genome packaging complex composed of packaging proteins 1, 2 and 3; this complex specifically binds to the packaging sequence on the left end of viral genomic DNA and performs packaging of the viral genome. Interacts with protein 33K.

The protein resides in the virion. The protein localises to the host nucleus. It is found in the host nucleoplasm. Its subcellular location is the host nucleolus. In terms of biological role, component of the packaging machinery which encapsidates the viral DNA into preformed capsids and transcriptional activator of the viral major late promoter (MLP). Binds, along with packaging proteins 2 and 3, to the specific packaging sequence on the left end of viral genomic DNA and displays ATPase activity thereby providing the power stroke of the packaging machinery. The activity of packaging protein IVa2 is stimulated by protein 33K which acts as a terminase. May be the protein that pumps DNA into the capsid powered by ATP hydrolysis. Specifically binds to the 5'-CG-3' nucleotides of the repeats making up the packaging sequence. Component of the DEF-A and DEF-B transcription factors that bind downstream elements of the major late promoter (MLP), and stimulate transcription from the MLP after initiation of viral DNA replication. DEF-A is a heterodimer packaging proteins 1 and 2 and DEF-B is a homodimer of packaging protein 1. The sequence is that of Packaging protein 1 from Human adenovirus F serotype 40 (HAdV-40).